We begin with the raw amino-acid sequence, 295 residues long: Sulfotransferase 1E1 (295 aa).

48–53 (KSGTTW) contacts 3'-phosphoadenylyl sulfate. A substrate-binding site is contributed by 106-108 (KTH). Catalysis depends on histidine 108, which acts as the Proton acceptor. Residues arginine 130 and serine 138 each coordinate 3'-phosphoadenylyl sulfate. A Phosphoserine modification is found at serine 156. 3'-phosphoadenylyl sulfate is bound by residues tyrosine 193, 227 to 232 (TSFQEM), and 257 to 259 (RKG).

It belongs to the sulfotransferase 1 family. In terms of assembly, homodimer. Testis and at very low level in the placenta.

It localises to the cytoplasm. The protein localises to the cytosol. It carries out the reaction estrone + 3'-phosphoadenylyl sulfate = estrone 3-sulfate + adenosine 3',5'-bisphosphate + H(+). The catalysed reaction is 17beta-estradiol + 3'-phosphoadenylyl sulfate = 17beta-estradiol 3-sulfate + adenosine 3',5'-bisphosphate + H(+). The enzyme catalyses (24S)-hydroxycholesterol + 3'-phosphoadenylyl sulfate = (24S)-hydroxycholesterol 3-sulfate + adenosine 3',5'-bisphosphate + H(+). It catalyses the reaction 3beta-hydroxyandrost-5-en-17-one + 3'-phosphoadenylyl sulfate = dehydroepiandrosterone 3-sulfate + adenosine 3',5'-bisphosphate + H(+). It carries out the reaction 4-ethylphenol + 3'-phosphoadenylyl sulfate = 4-ethylphenyl sulfate + adenosine 3',5'-bisphosphate + H(+). Inhibited by estradiol. Its function is as follows. Sulfotransferase that utilizes 3'-phospho-5'-adenylyl sulfate (PAPS) as sulfonate donor to catalyze the sulfate conjugation of estradiol and estrone. Is a key enzyme in estrogen homeostasis, the sulfation of estrogens leads to their inactivation. Also sulfates dehydroepiandrosterone, pregnenolone, (24S)-hydroxycholesterol and xenobiotic compounds like ethinylestradiol, equalenin, diethyl stilbesterol and 1-naphthol at significantly lower efficiency. Does not sulfonate cortisol, testosterone and dopamine. May play a role in gut microbiota-host metabolic interaction. O-sulfonates 4-ethylphenol (4-EP), a dietary tyrosine-derived metabolite produced by gut bacteria. The product 4-EPS crosses the blood-brain barrier and may negatively regulate oligodendrocyte maturation and myelination, affecting the functional connectivity of different brain regions associated with the limbic system. This Mus musculus (Mouse) protein is Sulfotransferase 1E1 (Sult1e1).